A 163-amino-acid chain; its full sequence is D-aminoacyl-tRNA deacylase (163 aa).

The short motif at 141–142 (GP) is the Gly-cisPro motif, important for rejection of L-amino acids element.

It belongs to the DTD family. Homodimer.

The protein localises to the cytoplasm. The enzyme catalyses glycyl-tRNA(Ala) + H2O = tRNA(Ala) + glycine + H(+). The catalysed reaction is a D-aminoacyl-tRNA + H2O = a tRNA + a D-alpha-amino acid + H(+). Its function is as follows. An aminoacyl-tRNA editing enzyme that deacylates mischarged D-aminoacyl-tRNAs. Also deacylates mischarged glycyl-tRNA(Ala), protecting cells against glycine mischarging by AlaRS. Acts via tRNA-based rather than protein-based catalysis; rejects L-amino acids rather than detecting D-amino acids in the active site. By recycling D-aminoacyl-tRNA to D-amino acids and free tRNA molecules, this enzyme counteracts the toxicity associated with the formation of D-aminoacyl-tRNA entities in vivo and helps enforce protein L-homochirality. The protein is D-aminoacyl-tRNA deacylase of Neisseria meningitidis serogroup A / serotype 4A (strain DSM 15465 / Z2491).